The sequence spans 462 residues: Elongation factor 1-alpha (462 aa).

Glycine 2 carries the n,N,N-trimethylglycine modification. The residue at position 3 (lysine 3) is an N6,N6-dimethyllysine; alternate. The residue at position 3 (lysine 3) is an N6-methyllysine; alternate. The region spanning 5–242 (KAHVNVVVIG…DAIEPPVRPS (238 aa)) is the tr-type G domain. The G1 stretch occupies residues 14–21 (GHVDSGKS). 14–21 (GHVDSGKS) serves as a coordination point for GTP. Lysine 30 is modified (N6-methyllysine). The tract at residues 70-74 (GITID) is G2. Lysine 79 is subject to N6,N6,N6-trimethyllysine. The G3 stretch occupies residues 91–94 (DAPG). Residues 91-95 (DAPGH) and 153-156 (NKMD) each bind GTP. Residues 153–156 (NKMD) are G4. Positions 192–194 (SGW) are G5. Lysine 318 carries the N6,N6-dimethyllysine; alternate modification. The residue at position 318 (lysine 318) is an N6-methyllysine; alternate. Lysine 392 bears the N6-methyllysine mark.

This sequence belongs to the TRAFAC class translation factor GTPase superfamily. Classic translation factor GTPase family. EF-Tu/EF-1A subfamily.

It is found in the cytoplasm. This protein promotes the GTP-dependent binding of aminoacyl-tRNA to the A-site of ribosomes during protein biosynthesis. The sequence is that of Elongation factor 1-alpha (TEF1) from Serendipita indica (Root endophyte fungus).